The sequence spans 241 residues: Uracil-DNA glycosylase (241 aa).

The Proton acceptor role is filled by Asp-71.

This sequence belongs to the uracil-DNA glycosylase (UDG) superfamily. UNG family.

The protein resides in the cytoplasm. It catalyses the reaction Hydrolyzes single-stranded DNA or mismatched double-stranded DNA and polynucleotides, releasing free uracil.. In terms of biological role, excises uracil residues from the DNA which can arise as a result of misincorporation of dUMP residues by DNA polymerase or due to deamination of cytosine. This Xanthomonas euvesicatoria pv. vesicatoria (strain 85-10) (Xanthomonas campestris pv. vesicatoria) protein is Uracil-DNA glycosylase.